The primary structure comprises 84 residues: Exodeoxyribonuclease 7 small subunit (84 aa).

The protein belongs to the XseB family. Heterooligomer composed of large and small subunits.

It localises to the cytoplasm. The catalysed reaction is Exonucleolytic cleavage in either 5'- to 3'- or 3'- to 5'-direction to yield nucleoside 5'-phosphates.. Bidirectionally degrades single-stranded DNA into large acid-insoluble oligonucleotides, which are then degraded further into small acid-soluble oligonucleotides. The protein is Exodeoxyribonuclease 7 small subunit of Caulobacter vibrioides (strain ATCC 19089 / CIP 103742 / CB 15) (Caulobacter crescentus).